Reading from the N-terminus, the 159-residue chain is Short coiled-coil protein (159 aa).

Residues 78-146 adopt a coiled-coil conformation; sequence MMNADMDAVD…QYIENLMSAS (69 aa).

It belongs to the SCOC family. Homodimer. Interacts with ARL1, ARL2 and ARL3. Directly interacts with FEZ1 and UVRAG. The interaction with UVRAG is reduced by amino acid starvation, but the complex is stabilized in the presence of FEZ1. Interacts with NRBF2. As to expression, widely expressed with highest levels in brain, heart and skeletal muscle.

It is found in the golgi apparatus membrane. The protein localises to the golgi apparatus. It localises to the trans-Golgi network. Its subcellular location is the cytoplasm. The protein resides in the cytosol. In terms of biological role, positive regulator of amino acid starvation-induced autophagy. The protein is Short coiled-coil protein (SCOC) of Homo sapiens (Human).